Consider the following 909-residue polypeptide: Golgin subfamily A member 6-like protein 2 (909 aa).

The span at methionine 1 to proline 11 shows a compositional bias: pro residues. 5 disordered regions span residues methionine 1–glutamine 88, glutamate 300–glutamate 362, glutamine 381–glutamate 408, lysine 425–proline 494, and glutamate 524–leucine 909. A compositionally biased stretch (basic and acidic residues) spans methionine 13–aspartate 31. Polar residues predominate over residues asparagine 53–alanine 77. Over residues glutamine 78–glutamine 88 the composition is skewed to basic and acidic residues. A coiled-coil region spans residues histidine 192–methionine 526. Composition is skewed to basic and acidic residues over residues lysine 425–glutamate 478 and glutamate 524–glutamine 542. Residues alanine 607 to methionine 620 are compositionally biased toward acidic residues. 2 stretches are compositionally biased toward gly residues: residues glycine 641–alanine 654 and glycine 676–valine 689. The span at glycine 692–arginine 719 shows a compositional bias: basic residues. Over residues alanine 746 to glycine 755 the composition is skewed to low complexity. Residues aspartate 757 to glycine 766 are compositionally biased toward acidic residues. Gly residues predominate over residues glycine 791–glycine 871. Positions aspartate 872 to arginine 892 are enriched in basic and acidic residues.

This sequence belongs to the GOLGA6 family.

The polypeptide is Golgin subfamily A member 6-like protein 2 (GOLGA6L2) (Homo sapiens (Human)).